The primary structure comprises 204 residues: MSRIVLASNNAKKLVELRRTFEGADTEVEIVGLSEVSDAPAPEETGRTFVENALIKARAAAHETGLPALADDSGLEVDALNRMPGIRSARWSGPHAHDERNLQLLLDQTFDLPDERRHGRFVCAMAFVDPDGTEITKVATMEGRIISEARGKNGFGYDPMFVPDAQPGDLTSAEMTPEVKDAISHRGQAVRAIVPAVVAHLEGR.

8–13 (SNNAKK) is a binding site for substrate. 2 residues coordinate Mg(2+): Glu-43 and Asp-72. Catalysis depends on Asp-72, which acts as the Proton acceptor. Residues Ser-73, 155 to 158 (FGYD), Lys-180, and 185 to 186 (HR) each bind substrate.

The protein belongs to the HAM1 NTPase family. In terms of assembly, homodimer. Mg(2+) serves as cofactor.

The enzyme catalyses XTP + H2O = XMP + diphosphate + H(+). It carries out the reaction dITP + H2O = dIMP + diphosphate + H(+). The catalysed reaction is ITP + H2O = IMP + diphosphate + H(+). Functionally, pyrophosphatase that catalyzes the hydrolysis of nucleoside triphosphates to their monophosphate derivatives, with a high preference for the non-canonical purine nucleotides XTP (xanthosine triphosphate), dITP (deoxyinosine triphosphate) and ITP. Seems to function as a house-cleaning enzyme that removes non-canonical purine nucleotides from the nucleotide pool, thus preventing their incorporation into DNA/RNA and avoiding chromosomal lesions. The sequence is that of dITP/XTP pyrophosphatase from Cutibacterium acnes (strain DSM 16379 / KPA171202) (Propionibacterium acnes).